We begin with the raw amino-acid sequence, 253 residues long: Ubiquinone/menaquinone biosynthesis C-methyltransferase UbiE (253 aa).

S-adenosyl-L-methionine is bound by residues Thr-76, Asp-97, 125–126 (NA), and Ser-142.

The protein belongs to the class I-like SAM-binding methyltransferase superfamily. MenG/UbiE family.

The enzyme catalyses a 2-demethylmenaquinol + S-adenosyl-L-methionine = a menaquinol + S-adenosyl-L-homocysteine + H(+). It catalyses the reaction a 2-methoxy-6-(all-trans-polyprenyl)benzene-1,4-diol + S-adenosyl-L-methionine = a 5-methoxy-2-methyl-3-(all-trans-polyprenyl)benzene-1,4-diol + S-adenosyl-L-homocysteine + H(+). It functions in the pathway quinol/quinone metabolism; menaquinone biosynthesis; menaquinol from 1,4-dihydroxy-2-naphthoate: step 2/2. The protein operates within cofactor biosynthesis; ubiquinone biosynthesis. Methyltransferase required for the conversion of demethylmenaquinol (DMKH2) to menaquinol (MKH2) and the conversion of 2-polyprenyl-6-methoxy-1,4-benzoquinol (DDMQH2) to 2-polyprenyl-3-methyl-6-methoxy-1,4-benzoquinol (DMQH2). The protein is Ubiquinone/menaquinone biosynthesis C-methyltransferase UbiE of Xylella fastidiosa (strain M12).